Here is a 357-residue protein sequence, read N- to C-terminus: CCN family member 3 (357 aa).

Positions 1 to 31 (MQSVQSTSFCLRKQCLCLTFLLLHLLGQVAA) are cleaved as a signal peptide. Residues 32–105 (TQRCPPQCPG…SNQTGICTAV (74 aa)) form the IGFBP N-terminal domain. 6 disulfide bridges follow: cysteine 35–cysteine 61, cysteine 39–cysteine 63, cysteine 43–cysteine 64, cysteine 50–cysteine 67, cysteine 75–cysteine 89, and cysteine 81–cysteine 102. N-linked (GlcNAc...) asparagine glycosylation occurs at asparagine 97. In terms of domain architecture, VWFC spans 108-174 (DNCVFDGVIY…GECCEKWICG (67 aa)). The 46-residue stretch at 205–250 (NCIEQTTEWTACSKSCGMGFSTRVTNRNRQCEMLKQTRLCMVRPCE) folds into the TSP type-1 domain. Residue cysteine 244 is the site of S-palmitoyl cysteine attachment. Intrachain disulfides connect cysteine 264/cysteine 301, cysteine 281/cysteine 315, cysteine 292/cysteine 331, cysteine 295/cysteine 333, and cysteine 300/cysteine 337. Residues 264-338 (CLRTKKSLKA…GTCTCHTNCP (75 aa)) form the CTCK domain. N-linked (GlcNAc...) asparagine glycosylation is present at asparagine 280.

It belongs to the CCN family. Interacts with FBLN1. Interacts (via CTCK domain) with NOTCH1 (via the EGF-like repeat region). Interacts with GJA1/CX43. Interacts with ITGA5:ITGB1, ITGAV:ITGB3 and ITGAV:ITGB5. Interacts with ZDHHC22; the interaction may lead to CCN3 palmitoylation. Post-translationally, may be palmitoylated on Cys-244, which is important for extracellular secretion. In terms of tissue distribution, expressed in endothelial cells (at protein level). Expressed in bone marrow and thymic cells.

It is found in the secreted. It localises to the cytoplasm. The protein localises to the cell junction. The protein resides in the gap junction. Functionally, immediate-early protein playing a role in various cellular processes including proliferation, adhesion, migration, differentiation and survival. Acts by binding to integrins or membrane receptors such as NOTCH1. Essential regulator of hematopoietic stem and progenitor cell function. Inhibits myogenic differentiation through the activation of Notch-signaling pathway. Inhibits vascular smooth muscle cells proliferation by increasing expression of cell-cycle regulators such as CDKN2B or CDKN1A independently of TGFB1 signaling. Ligand of integrins ITGAV:ITGB3 and ITGA5:ITGB1, acts directly upon endothelial cells to stimulate pro-angiogenic activities and induces angiogenesis. In endothelial cells, supports cell adhesion, induces directed cell migration (chemotaxis) and promotes cell survival. Also plays a role in cutaneous wound healing acting as integrin receptor ligand. Supports skin fibroblast adhesion through ITGA5:ITGB1 and ITGA6:ITGB1 and induces fibroblast chemotaxis through ITGAV:ITGB5. Seems to enhance bFGF-induced DNA synthesis in fibroblasts. Involved in bone regeneration as a negative regulator. Enhances the articular chondrocytic phenotype, whereas it repressed the one representing endochondral ossification. Impairs pancreatic beta-cell function, inhibits beta-cell proliferation and insulin secretion. Plays a role as negative regulator of endothelial pro-inflammatory activation reducing monocyte adhesion, its anti-inflammatory effects occur secondary to the inhibition of NF-kappaB signaling pathway. Contributes to the control and coordination of inflammatory processes in atherosclerosis. Attenuates inflammatory pain through regulation of IL1B- and TNF-induced MMP9, MMP2 and CCL2 expression. Inhibits MMP9 expression through ITGB1 engagement. Brain osteoanabolic hormone. Drives osteogenesis in osteochondral skeletal stem cells. During lactation, maintains the maternal skeleton and viability of offspring. In Homo sapiens (Human), this protein is CCN family member 3.